The following is a 254-amino-acid chain: Large ribosomal subunit protein uL2 (254 aa).

The protein belongs to the universal ribosomal protein uL2 family. In terms of assembly, component of the large ribosomal subunit. Mature ribosomes consist of a small (40S) and a large (60S) subunit. The 40S subunit contains about 32 different proteins and 1 molecule of RNA (18S). The 60S subunit contains 45 different proteins and 3 molecules of RNA (25S, 5.8S and 5S).

The protein localises to the cytoplasm. Component of the ribosome, a large ribonucleoprotein complex responsible for the synthesis of proteins in the cell. The small ribosomal subunit (SSU) binds messenger RNAs (mRNAs) and translates the encoded message by selecting cognate aminoacyl-transfer RNA (tRNA) molecules. The large subunit (LSU) contains the ribosomal catalytic site termed the peptidyl transferase center (PTC), which catalyzes the formation of peptide bonds, thereby polymerizing the amino acids delivered by tRNAs into a polypeptide chain. The nascent polypeptides leave the ribosome through a tunnel in the LSU and interact with protein factors that function in enzymatic processing, targeting, and the membrane insertion of nascent chains at the exit of the ribosomal tunnel. The protein is Large ribosomal subunit protein uL2 of Candida albicans (strain SC5314 / ATCC MYA-2876) (Yeast).